The primary structure comprises 82 residues: Putative defensin-like protein 70 (82 aa).

Positions 1–27 (MKMESSKMLVVFTLMVLIAVSSDLVSG) are cleaved as a signal peptide. 4 disulfide bridges follow: cysteine 39–cysteine 80, cysteine 43–cysteine 66, cysteine 52–cysteine 78, and cysteine 56–cysteine 79.

It belongs to the DEFL family.

The protein resides in the secreted. The protein is Putative defensin-like protein 70 (LCR83) of Arabidopsis thaliana (Mouse-ear cress).